A 322-amino-acid chain; its full sequence is UV DNA damage endonuclease (322 aa).

This sequence belongs to the uve1/UvsE family.

Functionally, component in a DNA repair pathway. Removal of UV LIGHT damaged nucleotides. Recognizes pyrimidine dimers and cleave a phosphodiester bond immediately 5' to the lesion. This Halalkalibacterium halodurans (strain ATCC BAA-125 / DSM 18197 / FERM 7344 / JCM 9153 / C-125) (Bacillus halodurans) protein is UV DNA damage endonuclease.